A 215-amino-acid chain; its full sequence is Small ribosomal subunit protein uS7 (215 aa).

It belongs to the universal ribosomal protein uS7 family. Part of the 30S ribosomal subunit.

One of the primary rRNA binding proteins, it binds directly to 16S rRNA where it nucleates assembly of the head domain of the 30S subunit. Is located at the subunit interface close to the decoding center. The polypeptide is Small ribosomal subunit protein uS7 (Thermococcus celer).